A 74-amino-acid polypeptide reads, in one-letter code: Small ribosomal subunit protein bS21 (74 aa).

This sequence belongs to the bacterial ribosomal protein bS21 family.

The sequence is that of Small ribosomal subunit protein bS21 from Coxiella burnetii (strain Dugway 5J108-111).